Consider the following 294-residue polypeptide: Protease HtpX homolog 2 (294 aa).

The next 2 helical transmembrane spans lie at 15 to 35 (MLFT…FLSY) and 37 to 57 (GTPP…QYFY). Zn(2+) is bound at residue histidine 140. The active site involves glutamate 141. Histidine 144 is a binding site for Zn(2+). Transmembrane regions (helical) follow at residues 151–171 (AVLT…RYSL) and 185–205 (GGIL…FLLI). Residue glutamate 213 participates in Zn(2+) binding.

This sequence belongs to the peptidase M48B family. Zn(2+) serves as cofactor.

It localises to the cell membrane. The chain is Protease HtpX homolog 2 from Methanosarcina acetivorans (strain ATCC 35395 / DSM 2834 / JCM 12185 / C2A).